The primary structure comprises 255 residues: Enkurin (255 aa).

The span at 1–10 shows a compositional bias: polar residues; that stretch reads MDSPCTSESI. Disordered regions lie at residues 1–25 and 67–96; these read MDSPCTSESIYNLIPSDLKEPPQHP and SKEKTLPPKKKFNRCSPKKPAVPLRTDHPV. Over residues 73-83 the composition is skewed to basic residues; the sequence is PPKKKFNRCSP. The short motif at 83-89 is the SH3-binding element; that stretch reads PKKPAVP. The 93-residue stretch at 160–252 folds into the Enkurin domain; that stretch reads KRNEDVKKAQ…VIEKHKIIYI (93 aa). Residues 160-255 form an interaction with TRPC proteins region; sequence KRNEDVKKAQ…KHKIIYIANK (96 aa). The IQ domain maps to 176 to 187; that stretch reads IQENLKKAAMKR.

As to quaternary structure, microtubule inner protein component of sperm flagellar doublet microtubules. Binds calmodulin via its IQ domain. Interacts with TRPC1, TRPC2, TRPC5, but not TRPC3. Interacts with CFAP45. In terms of tissue distribution, high expression in testis and vomeronasal organ and lower expression in ovary, heart, lung, and brain. Not expressed in other tissues.

The protein resides in the cytoplasm. Its subcellular location is the cytoskeleton. The protein localises to the cilium axoneme. It is found in the flagellum axoneme. In terms of biological role, adapter that functions to localize a calcium-sensitive signal transduction machinery in sperm to a calcium-permeable ion channel. Microtubule inner protein (MIP) part of the dynein-decorated doublet microtubules (DMTs) in cilia axoneme, which is required for motile cilia beating. This is Enkurin (Enkur) from Mus musculus (Mouse).